We begin with the raw amino-acid sequence, 478 residues long: Protein FAM83E (478 aa).

The interval 1-293 (MAASQLAALE…LYAASCPLPP (293 aa)) is DUF1669. Disordered stretches follow at residues 292 to 334 (PPAP…PLAH), 359 to 436 (RART…LPPA), and 452 to 478 (DATF…GGQP). Over residues 309-319 (RSPHRVSRRRS) the composition is skewed to basic residues. The segment covering 379–388 (RLSQLSGSSD) has biased composition (polar residues).

Belongs to the FAM83 family. Directly interacts (via DUF1669) with CSNK1A1, CSNK1A1L, CSNK1D and CSNK1E. May interact with RAF1.

It is found in the cytoplasm. The protein resides in the perinuclear region. May play a role in MAPK signaling. The sequence is that of Protein FAM83E from Homo sapiens (Human).